The primary structure comprises 518 residues: Triacylglycerol lipase OBL1 (518 aa).

Residues Gly-93–Leu-113 traverse the membrane as a helical segment. A GXSXG motif is present at residues Gly-337–Gly-341. Ser-339 acts as the Nucleophile in catalysis. Residues Asp-403 and His-496 each act as charge relay system in the active site.

It belongs to the AB hydrolase superfamily. Lipase family. In terms of tissue distribution, expressed in pollen grains, pollen tubes, developing embryos, developing seeds and germinating seeds.

The protein localises to the lipid droplet. Its subcellular location is the membrane. It catalyses the reaction 1,2-di-(9Z-octadecenoyl)-glycerol + (9Z)-octadecenoate + H(+) = 1,2,3-tri-(9Z-octadecenoyl)-glycerol + H2O. It carries out the reaction 1-(9Z-octadecenoyl)-glycerol + H2O = glycerol + (9Z)-octadecenoate + H(+). Functionally, acid lipase that can hydrolyze a range of triacylglycerols without a clear preference for acyl-chains. Can also cleave 1,2-diacylglycerol, 1,3-diacylglycerol and 1-monoacylglycerol, but not phosphatidylcholine, phosphatidylethanolamine, or sterol esters. Required for pollen tube growth. Triacylglycerol hydrolysis by OBL1 may provide acyl groups for the synthesis of membrane lipids in growing pollen tubes. This chain is Triacylglycerol lipase OBL1, found in Arabidopsis thaliana (Mouse-ear cress).